A 546-amino-acid chain; its full sequence is Probable protein kinase UbiB (546 aa).

A Protein kinase domain is found at 124–502; that stretch reads DFEIKPLASA…HVRQGQSRYF (379 aa). Residues 130-138 and K153 contribute to the ATP site; that span reads LASASIAQV. The active-site Proton acceptor is the D288. 2 helical membrane passes run 501 to 521 and 522 to 542; these read YFLG…VSRP and EWGL…FVGW.

The protein belongs to the ABC1 family. UbiB subfamily.

It localises to the cell inner membrane. Its pathway is cofactor biosynthesis; ubiquinone biosynthesis [regulation]. Its function is as follows. Is probably a protein kinase regulator of UbiI activity which is involved in aerobic coenzyme Q (ubiquinone) biosynthesis. The chain is Probable protein kinase UbiB from Escherichia coli (strain SMS-3-5 / SECEC).